Here is a 388-residue protein sequence, read N- to C-terminus: ATP phosphoribosyltransferase regulatory subunit (388 aa).

This sequence belongs to the class-II aminoacyl-tRNA synthetase family. HisZ subfamily. As to quaternary structure, heteromultimer composed of HisG and HisZ subunits.

The protein localises to the cytoplasm. Its pathway is amino-acid biosynthesis; L-histidine biosynthesis; L-histidine from 5-phospho-alpha-D-ribose 1-diphosphate: step 1/9. Functionally, required for the first step of histidine biosynthesis. May allow the feedback regulation of ATP phosphoribosyltransferase activity by histidine. This chain is ATP phosphoribosyltransferase regulatory subunit, found in Acinetobacter baylyi (strain ATCC 33305 / BD413 / ADP1).